A 277-amino-acid polypeptide reads, in one-letter code: Heme oxygenase (277 aa).

His-29 contacts heme b.

The protein belongs to the heme oxygenase family.

It localises to the microsome. The protein localises to the endoplasmic reticulum. The catalysed reaction is heme b + 3 reduced [NADPH--hemoprotein reductase] + 3 O2 = biliverdin IXalpha + CO + Fe(2+) + 3 oxidized [NADPH--hemoprotein reductase] + 3 H2O + H(+). Functionally, heme oxygenase cleaves the heme ring at the alpha methene bridge to form biliverdin. Biliverdin is subsequently converted to bilirubin by biliverdin reductase. Under physiological conditions, the activity of heme oxygenase is highest in the spleen, where senescent erythrocytes are sequestrated and destroyed. The polypeptide is Heme oxygenase (hmox) (Takifugu rubripes (Japanese pufferfish)).